Here is a 128-residue protein sequence, read N- to C-terminus: Large ribosomal subunit protein bL19 (128 aa).

It belongs to the bacterial ribosomal protein bL19 family.

Functionally, this protein is located at the 30S-50S ribosomal subunit interface and may play a role in the structure and function of the aminoacyl-tRNA binding site. In Caldicellulosiruptor bescii (strain ATCC BAA-1888 / DSM 6725 / KCTC 15123 / Z-1320) (Anaerocellum thermophilum), this protein is Large ribosomal subunit protein bL19.